The primary structure comprises 355 residues: uncharacterized protein (355 aa).

3 helical membrane passes run 275–295 (SLIV…FVAF), 301–321 (WNSI…VVGV), and 330–350 (IAST…PLAL).

It to M.tuberculosis Rv0497.

The protein localises to the cell membrane. This is an uncharacterized protein from Mycobacterium leprae (strain TN).